The sequence spans 145 residues: UPF0735 ACT domain-containing protein CLL_A2896 (145 aa).

In terms of domain architecture, ACT spans 69–144 (TFNLIVKDQT…YVEKIEFVAM (76 aa)).

This sequence belongs to the UPF0735 family.

The polypeptide is UPF0735 ACT domain-containing protein CLL_A2896 (Clostridium botulinum (strain Eklund 17B / Type B)).